Consider the following 372-residue polypeptide: Glutamate 5-kinase (372 aa).

An ATP-binding site is contributed by K14. Substrate is bound by residues S54, D141, and N153. 173–174 (TD) provides a ligand contact to ATP. The PUA domain occupies 280–358 (RGTLVLDAGA…DAIESILGYS (79 aa)).

The protein belongs to the glutamate 5-kinase family.

The protein localises to the cytoplasm. The enzyme catalyses L-glutamate + ATP = L-glutamyl 5-phosphate + ADP. Its pathway is amino-acid biosynthesis; L-proline biosynthesis; L-glutamate 5-semialdehyde from L-glutamate: step 1/2. Catalyzes the transfer of a phosphate group to glutamate to form L-glutamate 5-phosphate. This Pseudomonas putida (strain GB-1) protein is Glutamate 5-kinase.